Consider the following 718-residue polypeptide: Sodium/myo-inositol cotransporter (718 aa).

Topologically, residues 1-9 are extracellular; that stretch reads MRAVLDTAD. Residues 10–29 traverse the membrane as a helical segment; that stretch reads IAIVALYFILVMCIGFFAMW. At 30–38 the chain is on the cytoplasmic side; that stretch reads KSNRSTVSG. Residues 39-57 form a helical membrane-spanning segment; it reads YFLAGRSMTWVAIGASLFV. At 58–86 the chain is on the extracellular side; sequence SNIGSEHFIGLAGSGAASGFAVGAWEFNA. The chain crosses the membrane as a helical span at residues 87–110; it reads LLLLQLLGWVFIPIYIRSGVYTMP. Over 111-123 the chain is Cytoplasmic; it reads EYLSKRFGGHRIQ. A helical membrane pass occupies residues 124 to 144; it reads VYFAALSLILYIFTKLSVDLY. Residues 145–157 lie on the Extracellular side of the membrane; that stretch reads SGALFIQESLGWN. A helical membrane pass occupies residues 158 to 183; it reads LYVSVILLIGMTALLTVTGGLVAVIY. The Cytoplasmic portion of the chain corresponds to 184 to 186; the sequence is TDT. The helical transmembrane segment at 187–205 threads the bilayer; it reads LQALLMIIGALTLMIISIM. The Extracellular portion of the chain corresponds to 206–303; the sequence is EIGGFEEVKR…HAKGSTLMAG (98 aa). N-linked (GlcNAc...) asparagine glycosylation is present at Asn-232. A helical membrane pass occupies residues 304–324; it reads FLKLLPMFIIVVPGMISRILF. The Cytoplasmic portion of the chain corresponds to 325-353; sequence TDDIACINPEHCMLVCGSRAGCSNIAYPR. The helical transmembrane segment at 354–376 threads the bilayer; the sequence is LVMKLVPVGLRGLMMAVMIAALM. At 377–406 the chain is on the extracellular side; it reads SDLDSIFNSASTIFTLDVYKLIRKSASSRE. A helical transmembrane segment spans residues 407–430; sequence LMIVGRIFVAFMVVISIAWVPIIV. At 431-443 the chain is on the cytoplasmic side; it reads EMQGGQMYLYIQE. Residues 444 to 462 form a helical membrane-spanning segment; it reads VADYLTPPVAALFLLAIFW. The Extracellular portion of the chain corresponds to 463–510; sequence KRCNEQGAFYGGMAGFVLGAVRLILAFAYRAPECDQPDNRPGFIKDIH. A helical membrane pass occupies residues 511-532; that stretch reads YMYVATGLFWVTGLITVIVSLL. Topologically, residues 533–695 are cytoplasmic; that stretch reads TPPPTKEQIR…QMLEETRQVK (163 aa). 2 positions are modified to phosphoserine: Ser-594 and Ser-632. Residues 696–716 form a helical membrane-spanning segment; that stretch reads VILNIGLFAVCSLGIFMFVYF. Residues 717 to 718 lie on the Extracellular side of the membrane; sequence SL.

This sequence belongs to the sodium:solute symporter (SSF) (TC 2.A.21) family. In terms of assembly, interacts with KCNQ2 (via the pore module). Interacts with KCNQ1; this interaction is direct. Forms coregulatory complexes with ion channels KCNQ2-KCNQ3 and KCNQ1-KCNE2.

It is found in the apical cell membrane. Its subcellular location is the basolateral cell membrane. It catalyses the reaction myo-inositol(out) + 2 Na(+)(out) = myo-inositol(in) + 2 Na(+)(in). It carries out the reaction scyllo-inositol(out) + 2 Na(+)(out) = scyllo-inositol(in) + 2 Na(+)(in). Functionally, electrogenic Na(+)-coupled sugar symporter that actively transports myo-inositol and its stereoisomer scyllo-inositol across the plasma membrane, with a Na(+) to sugar coupling ratio of 2:1. Maintains myo-inositol concentration gradient that defines cell volume and fluid balance during osmotic stress, in particular in the fetoplacental unit and central nervous system. Forms coregulatory complexes with voltage-gated K(+) ion channels, allosterically altering ion selectivity, voltage dependence and gating kinetics of the channel. In turn, K(+) efflux through the channel forms a local electrical gradient that modulates electrogenic Na(+)-coupled myo-inositol influx through the transporter. Associates with KCNQ1-KCNE2 channel in the apical membrane of choroid plexus epithelium and regulates the myo-inositol gradient between blood and cerebrospinal fluid with an impact on neuron excitability. Associates with KCNQ2-KCNQ3 channel altering ion selectivity, increasing Na(+) and Cs(+) permeation relative to K(+) permeation. Provides myo-inositol precursor for biosynthesis of phosphoinositides such as PI(4,5)P2, thus indirectly affecting the activity of phosphoinositide-dependent ion channels and Ca(2+) signaling upon osmotic stress. This chain is Sodium/myo-inositol cotransporter, found in Homo sapiens (Human).